We begin with the raw amino-acid sequence, 317 residues long: Cytochrome f (317 aa).

An N-terminal signal peptide occupies residues 1–34; the sequence is MKGLKNQIMKKTSLFICTLLFILSIVFYPKITFA. Residues Tyr35, Cys55, Cys58, and His59 each coordinate heme. Residues 284-304 traverse the membrane as a helical segment; the sequence is VIGLIAFFIGVGLTQILLVLK.

Belongs to the cytochrome f family. In terms of assembly, the 4 large subunits of the cytochrome b6-f complex are cytochrome b6, subunit IV (17 kDa polypeptide, PetD), cytochrome f and the Rieske protein, while the 4 small subunits are PetG, PetL, PetM and PetN. The complex functions as a dimer. Requires heme as cofactor.

Its subcellular location is the cellular thylakoid membrane. Component of the cytochrome b6-f complex, which mediates electron transfer between photosystem II (PSII) and photosystem I (PSI), cyclic electron flow around PSI, and state transitions. This chain is Cytochrome f, found in Prochlorococcus marinus (strain MIT 9215).